We begin with the raw amino-acid sequence, 464 residues long: MMARRDPTSWAKRLVRAQTLQKQRRAPVGPRAPPPDEEDPRLKCKNCGAFGHTARSTRCPMKCWKAALVPATLGKKEGKENLKPWKPRVEANPGPLNKDKGEKEERPRQQDPQRKALLHMFSGKPPEKPLPNGKGSTEPSDYLRVASGPMPVHTTSKRPRVDPVLADGSATEMSDRGSVLASLSPLRKASLSSSSSLGPKERQTGAAADIPQPAVRHQGREPLLVVKPTHSSPEGGCREVPQAASKTHGLLQAARPQAQDKRPAVTSQPCPPAATHSLGLGSNLSFGPGAKRPAQAPIQACLNFPKKPRLGPFQIPESAIQGGELGAPENLQPPPAATELGPSTSPQMGRRTPAQVPSVERQPPHSRPCLPTAQACTMSHHSAASHDGAQPLRVLFRRLENGRWSSSLLAAPSFHSPEKPGAFLAQSPHVSEKSEAPCVRVPPSVLYEDLQVSSSSEDSDSDLE.

Disordered stretches follow at residues 1 to 42, 70 to 389, and 411 to 437; these read MMAR…DPRL, PATL…HDGA, and APSF…SEAP. 2 stretches are compositionally biased toward basic and acidic residues: residues 74-89 and 97-114; these read GKKE…KPRV and NKDK…DPQR. Low complexity predominate over residues 180-197; the sequence is LASLSPLRKASLSSSSSL.

This sequence belongs to the FAM90 family.

This Homo sapiens (Human) protein is Protein FAM90A3.